The primary structure comprises 415 residues: Gamma-glutamyl phosphate reductase (415 aa).

It belongs to the gamma-glutamyl phosphate reductase family.

It localises to the cytoplasm. The enzyme catalyses L-glutamate 5-semialdehyde + phosphate + NADP(+) = L-glutamyl 5-phosphate + NADPH + H(+). Its pathway is amino-acid biosynthesis; L-proline biosynthesis; L-glutamate 5-semialdehyde from L-glutamate: step 2/2. Functionally, catalyzes the NADPH-dependent reduction of L-glutamate 5-phosphate into L-glutamate 5-semialdehyde and phosphate. The product spontaneously undergoes cyclization to form 1-pyrroline-5-carboxylate. This Desulforamulus reducens (strain ATCC BAA-1160 / DSM 100696 / MI-1) (Desulfotomaculum reducens) protein is Gamma-glutamyl phosphate reductase.